A 269-amino-acid polypeptide reads, in one-letter code: Putative ankyrin repeat protein L23 (269 aa).

ANK repeat units follow at residues 118-147 (EDDY…DIKS), 148-177 (DGDY…DIRA), 179-207 (NDYA…NIRE), 208-237 (QNDY…DIRA), and 238-267 (DNDC…DIRA).

The polypeptide is Putative ankyrin repeat protein L23 (Acanthamoeba polyphaga (Amoeba)).